The sequence spans 590 residues: Vesicular glutamate transporter 3 (590 aa).

At 1–76 (MPLGGFAGLK…CGCFGLPKRY (76 aa)) the chain is on the cytoplasmic side. Residues 77-97 (IIAMLSGLGFCISFGIRCNLG) traverse the membrane as a helical segment. Topologically, residues 98 to 130 (VAIVEMVNNNTVYINGTAVMQPAQFNWDPETVG) are vesicular. Asn106 and Asn112 each carry an N-linked (GlcNAc...) asparagine glycan. A helical membrane pass occupies residues 131 to 151 (LIHGSFFWGYIVTQIPGGFIS). Over 152–153 (NK) the chain is Cytoplasmic. The helical transmembrane segment at 154 to 174 (LAANRVFGAAIFLTSVLNMFI) threads the bilayer. At 175 to 182 (PSAARVHY) the chain is on the vesicular side. A helical membrane pass occupies residues 183-203 (GCVMFVRILQGLVEGVTYPAC). The Cytoplasmic portion of the chain corresponds to 204-221 (HGMWSKWAPPLERSRLAT). The helical transmembrane segment at 222–242 (TSFCGSYAGAVIAMPLAGILV) threads the bilayer. The Vesicular segment spans residues 243–249 (QYVGWPS). The helical transmembrane segment at 250-270 (VFYIYGVFGIIWYIFWILLAY) threads the bilayer. At 271 to 315 (NSPAVHPTISEEERNYIETSIGEGANLMSSTEKFKTPWREFFTSM) the chain is on the cytoplasmic side. Residues 316–336 (PVYAIIVANFCRSWTFYLLLI) form a helical membrane-spanning segment. The Vesicular portion of the chain corresponds to 337-354 (SQPAYFEEVFGFPISKVG). A helical transmembrane segment spans residues 355–375 (ILSAVPHMVMTIIVPIGGQLA). The Cytoplasmic segment spans residues 376–391 (DFLRSRKILSTTTVRK). A helical transmembrane segment spans residues 392–412 (IMNCGGFGMEATLLLVVGFSH). The Vesicular portion of the chain corresponds to 413 to 414 (TR). A helical transmembrane segment spans residues 415 to 435 (AVAISFLILAVGFSGFAISGF). Over 436–448 (NVNHLDIAPRYAS) the chain is Cytoplasmic. A helical membrane pass occupies residues 449-469 (ILMGISNGVGTLSGMVCPLIV). The Vesicular segment spans residues 470–482 (GALTKHKTRLEWQ). Residues 483–503 (HVFVIASMVHYTGVIFYAIFA) traverse the membrane as a helical segment. Over 504 to 587 (SGEKQDWADP…NHYENGEYQT (84 aa)) the chain is Cytoplasmic. Positions 526–535 (EDELADETEP) are enriched in acidic residues. The interval 526 to 590 (EDELADETEP…ENGEYQTQYQ (65 aa)) is disordered. Polar residues predominate over residues 536–557 (SSDSGLATRQKTYGTTDNSSGR).

It belongs to the major facilitator superfamily. Sodium/anion cotransporter family. VGLUT subfamily.

The protein localises to the cytoplasmic vesicle. It is found in the secretory vesicle. Its subcellular location is the synaptic vesicle membrane. It localises to the cell membrane. The protein resides in the synapse. The protein localises to the synaptosome. The enzyme catalyses L-glutamate(out) = L-glutamate(in). It carries out the reaction 3 Na(+)(out) + phosphate(out) = 3 Na(+)(in) + phosphate(in). The catalysed reaction is chloride(in) = chloride(out). With respect to regulation, the L-glutamate uniporter activity exhibits a biphasic dependence on chloride concentration. Chloride channel activity is allosterically activated by lumenal H(+) and Cl(-) leading to synaptic vesicles acidification. The glutamate transport activity is allosterically activated by lumenal H(+) and Cl(-), preventing non-vesicular L-glutamate release. In terms of biological role, multifunctional transporter that transports L-glutamate as well as multiple ions such as chloride, sodium and phosphate. At the synaptic vesicle membrane, mainly functions as an uniporter that mediates the uptake of L-glutamate into synaptic vesicles at presynaptic nerve terminals of excitatory neural cells. The L-glutamate uniporter activity is electrogenic and is driven by the proton electrochemical gradient, mainly by the electrical gradient established by the vacuolar H(+)-ATPase across the synaptic vesicle membrane. In addition, functions as a chloride channel that allows a chloride permeation through the synaptic vesicle membrane that affects the proton electrochemical gradient and promotes synaptic vesicles acidification. At the plasma membrane, following exocytosis, functions as a symporter of Na(+) and phosphate from the extracellular space to the cytoplasm allowing synaptic phosphate homeostasis regulation. The symporter activity is electrogenic. Moreover, operates synergistically with SLC18A3/VACHT under a constant H(+) gradient, thereby allowing striatal vesicular acetylcholine uptake. In Danio rerio (Zebrafish), this protein is Vesicular glutamate transporter 3.